Here is a 503-residue protein sequence, read N- to C-terminus: Transcriptional regulator LovE (503 aa).

Residues 1-14 (MAADQGTFTTSVTL) show a composition bias toward polar residues. The segment at 1 to 21 (MAADQGTFTTSVTLSPVEGSR) is disordered. The segment at residues 35-67 (CDRCHAQKIKCTGNKEVTARAPCQRCQQAGLRC) is a DNA-binding region (zn(2)-C6 fungal-type). 2 disordered regions span residues 89 to 124 (ADPD…RQFL) and 331 to 362 (SHMN…DTIP). Residues 339–349 (SRSESPSRDDT) are compositionally biased toward basic and acidic residues. Polar residues predominate over residues 350 to 359 (SSTSGHSSVD).

Its subcellular location is the nucleus. Transcription factor that regulates the expression of the he gene cluster that mediates the biosynthesis of lovastatin (also known as mevinolin, mevacor or monacolin K), a hypolipidemic inhibitor of (3S)-hydroxymethylglutaryl-coenzyme A (HMG-CoA) reductase (HMGR). This chain is Transcriptional regulator LovE, found in Aspergillus terreus (strain NIH 2624 / FGSC A1156).